Consider the following 268-residue polypeptide: Esterase GME11355 (268 aa).

Residues serine 122, aspartate 212, and histidine 240 each act as charge relay system in the active site.

Belongs to the LovG family.

The protein operates within secondary metabolite biosynthesis. Functionally, esterase; part of the gene cluster that mediates the biosynthesis of dibenzodioxocinones such as pestalotiollide B, a novel class of inhibitors against cholesterol ester transfer protein (CEPT). The biosynthesis initiates from condensation of acetate and malonate units catalyzed by the non-reducing PKS pks8/GME11356. Pks8/GME11356 lacks a thioesterase (TE) domain, which is important to the cyclizing of the third ring of atrochrysone carboxylic acid, and the esterase GME11355 might play the role of TE and catalyzes the cyclization reaction of the C ring. The lactamase-like protein GME11357 (or other beta-lactamases in Pestalotiopsis microspora) probably hydrolyzes the thioester bond between the ACP of pks8/GME11356 and the intermediate to release atrochrysone carboxylic acid, which is spontaneously dehydrates to form endocrocin anthrone. Endocrocin anthrone is further converted to emodin via the endocrocin intermediate. Emodin is then oxidized by several enzymes such as the Baeyer-Villiger oxidase GME11358, the oxidoreductase GME11367, the short chain dehydrogenase/reductase GME11373, as well as by other oxidoreductases from the cluster, to modify the A and C rings and open the B ring, and finally yield monodictyphenone. The prenyltransferase GME11375 may catalyze the addition reaction between the C5 side chains and the carbon bone of dibenzodioxocinones. The remaining biochemical reactions to the final product dibenzodioxocinones should be methylation catalyzed by methyltransferase GME11366 and reduction and lactonization reaction catalyzed by a series of oxidordeuctases. The chain is Esterase GME11355 from Pestalotiopsis microspora.